A 261-amino-acid chain; its full sequence is tRNA pseudouridine synthase A (261 aa).

Aspartate 51 (nucleophile) is an active-site residue. Tyrosine 109 lines the substrate pocket.

Belongs to the tRNA pseudouridine synthase TruA family. As to quaternary structure, homodimer.

The catalysed reaction is uridine(38/39/40) in tRNA = pseudouridine(38/39/40) in tRNA. Functionally, formation of pseudouridine at positions 38, 39 and 40 in the anticodon stem and loop of transfer RNAs. In Tolumonas auensis (strain DSM 9187 / NBRC 110442 / TA 4), this protein is tRNA pseudouridine synthase A.